The sequence spans 25 residues: Arginine attenuator peptide (25 aa).

The protein belongs to the arginine attenuator peptide family.

Arginine attenuator peptide (AAP) that has a regulatory role in the production of arginine-specific carbamoyl phosphate synthetase. Encoded by an upstream open reading frame (uORF) within the 5'-leader region of arginine-specific carbamoyl phosphate synthetase small chain (CPA1) mRNA, it attenuates the translation of the downstream CPA1 ORF. In the presence of high concentrations of arginine, ribosomes translating the uORF encoding AAP stall at the termination codon, resulting in reduced translation from the downstream CPA1 initiation codon. This Saccharomyces cerevisiae (strain ATCC 204508 / S288c) (Baker's yeast) protein is Arginine attenuator peptide.